A 610-amino-acid chain; its full sequence is MFDAKAFLADVPHLPGVYRMYDAKNTIIYVGKAKDLKKRLSSYFRSQLASKKTEALVANIHHIETTITHSETEALLLEHNYIKENQPKYNVLLRDDKSYPYILLTKHQHPRITSFRGSKKVAGEYFGPYPNAGAVRETLNLLQKLFPIRQCEDSYYKNRSRPCLQYQIGRCLAPCVESYYSQAEYDNQVNLVRLFLQGKDGQVIEHLVQKMENAAQELDFEAAARFRDQIQSVRAVQEKQFVSNERLDDLDIISIAYQHGIACVHILFVRHGKVLGNRSYFPKVPNNTDLSELADTFVGQFYLQMNQHRTIPNQIIIDQPLSESAALADVLSEQAGHKVSIADKNIRGDKSRYLALAKTNAEAALTLQLKQDTHIRQRYDSLKTLLNLAEIKRMECFDISHTMGNQTVASCVVFDENGPLKSDYRRFNIEGITGGDDYAAMEQALLKRYSRHLEEEKIPDIIFIDGGKGQLNRALETFASLNVSWDKRKPLLIGVAKGVERKAGLETLLISKWDKEIHLPPDSPALHLIQHIRDESHNHAITGHRKKRQKAFTESGLESIAGVGAKRRQALLKYLGGMQGVKAATLEEIQSVPGISKQLAEVIFDTLQHS.

The region spanning 13 to 91 (HLPGVYRMYD…IKENQPKYNV (79 aa)) is the GIY-YIG domain. One can recognise a UVR domain in the interval 201–236 (GQVIEHLVQKMENAAQELDFEAAARFRDQIQSVRAV).

Belongs to the UvrC family. Interacts with UvrB in an incision complex.

It localises to the cytoplasm. In terms of biological role, the UvrABC repair system catalyzes the recognition and processing of DNA lesions. UvrC both incises the 5' and 3' sides of the lesion. The N-terminal half is responsible for the 3' incision and the C-terminal half is responsible for the 5' incision. The chain is UvrABC system protein C from Actinobacillus pleuropneumoniae serotype 3 (strain JL03).